A 1001-amino-acid chain; its full sequence is Integrator complex subunit 7 (1001 aa).

Residues 980–1001 (DPSKQGAPAPSTSQAVGQTRRF) form a disordered region. Over residues 989–1001 (PSTSQAVGQTRRF) the composition is skewed to polar residues.

It belongs to the Integrator subunit 7 family. Belongs to the multiprotein complex Integrator, at least composed of IntS1, IntS2, IntS3, IntS4, omd/IntS5, IntS6, defl/IntS7, IntS8, IntS9, IntS10, IntS11, IntS12, asun/IntS13, IntS14 and IntS15. The core complex associates with protein phosphatase 2A subunits mts/PP2A and Pp2A-29B, to form the Integrator-PP2A (INTAC) complex.

It is found in the nucleus. The protein localises to the cytoplasm. Component of the integrator complex, a multiprotein complex that terminates RNA polymerase II (Pol II) transcription in the promoter-proximal region of genes. The integrator complex provides a quality checkpoint during transcription elongation by driving premature transcription termination of transcripts that are unfavorably configured for transcriptional elongation: the complex terminates transcription by (1) catalyzing dephosphorylation of the C-terminal domain (CTD) of Pol II subunit Polr2A/Rbp1 and Spt5, and (2) degrading the exiting nascent RNA transcript via endonuclease activity. The integrator complex is also involved in the 3'-end processing of the U7 snRNA, and also the spliceosomal snRNAs U1, U2, U4 and U5. The chain is Integrator complex subunit 7 from Drosophila melanogaster (Fruit fly).